Here is a 410-residue protein sequence, read N- to C-terminus: Demethyl-4-deoxygadusol synthase (410 aa).

NAD(+)-binding positions include 56-58 (DAN), 87-90 (EPDK), 119-123 (GLITD), 143-144 (TT), Lys-156, Lys-165, and 183-186 (LLRT). Zn(2+) contacts are provided by Glu-198, His-271, and His-287.

It belongs to the sugar phosphate cyclases superfamily. DDGS family. Homodimer. Requires NAD(+) as cofactor. Co(2+) serves as cofactor. The cofactor is Zn(2+).

The enzyme catalyses D-sedoheptulose 7-phosphate = (R)-demethyl-4-deoxygadusol + phosphate + H2O + H(+). Catalyzes the conversion of sedoheptulose 7-phosphate to demethyl-4-deoxygadusol (DDG). Involved in the synthesis of the mycosporine-like amino acid shinorine, a natural sunscreen compound that protects the cell against UV radiation. This chain is Demethyl-4-deoxygadusol synthase, found in Trichormus variabilis (strain ATCC 29413 / PCC 7937) (Anabaena variabilis).